Reading from the N-terminus, the 737-residue chain is Prospero homeobox protein 1 (737 aa).

The interaction with RORG stretch occupies residues 1-28 (MPDHDSTALLSRQTKRRRVDIGVKRTVG). Polar residues predominate over residues 103-135 (KNGGTEPSFQASGLSSTGSEVHQEDICSNSSRD). The tract at residues 103–149 (KNGGTEPSFQASGLSSTGSEVHQEDICSNSSRDSPPECLSPFGRPTM) is disordered. 3 positions are modified to phosphoserine: serine 177, serine 179, and serine 199. The tract at residues 178 to 242 (HSPSVALRGN…REERRQLKQQ (65 aa)) is disordered. Residues 213–223 (LPQQQQQSFQQ) show a composition bias toward low complexity. Over residues 227-242 (ARKEQKREERRQLKQQ) the composition is skewed to basic and acidic residues. Phosphoserine occurs at positions 291 and 295. Residues 320-337 (MAENKPKREGNNKERDHG) are compositionally biased toward basic and acidic residues. 2 disordered regions span residues 320–344 (MAENKPKREGNNKERDHGPNSLQPE) and 445–476 (KNSSDQSASGPAAGGHHQPLHQSPLSATTGFT). A Glycyl lysine isopeptide (Lys-Gly) (interchain with G-Cter in SUMO2) cross-link involves residue lysine 324. Residues 464–476 (LHQSPLSATTGFT) show a composition bias toward polar residues. Serine 511, serine 514, and serine 557 each carry phosphoserine. The region spanning 577–635 (QEGLSPNHLKKAKLMFFYTRYPSSNMLKTYFSDVKFNRCITSQLIKWFSNFREFYYIQM) is the Prospero-type homeo domain. The interval 577–735 (QEGLSPNHLK…KSPNCLQELL (159 aa)) is homeo-Prospero. In terms of domain architecture, Prospero spans 636 to 735 (EKYARQAIND…KSPNCLQELL (100 aa)). Residues 723 to 729 (EIFKSPN) are essential for nuclear localization, interaction with RORG, repression of RORG transcriptional activator activity.

This sequence belongs to the Prospero homeodomain family. As to quaternary structure, interacts with RORA and RORG (via AF-2 motif). Most actively expressed in the developing lens. Detected also in embryonic brain, lung, liver and kidney. In adult, it is more abundant in heart and liver than in brain, skeletal muscle, kidney and pancreas.

The protein localises to the nucleus. Its function is as follows. Transcription factor involved in developmental processes such as cell fate determination, gene transcriptional regulation and progenitor cell regulation in a number of organs. Plays a critical role in embryonic development and functions as a key regulatory protein in neurogenesis and the development of the heart, eye lens, liver, pancreas and the lymphatic system. Involved in the regulation of the circadian rhythm. Represses: transcription of the retinoid-related orphan receptor RORG, transcriptional activator activity of RORA and RORG and the expression of RORA/G-target genes including core clock components: BMAL1, NPAS2 and CRY1 and metabolic genes: AVPR1A and ELOVL3. The sequence is that of Prospero homeobox protein 1 (PROX1) from Homo sapiens (Human).